The sequence spans 175 residues: NADH-ubiquinone oxidoreductase chain 6 (175 aa).

5 helical membrane-spanning segments follow: residues 1 to 21, 27 to 47, 49 to 69, 88 to 108, and 149 to 169; these read MMTY…VGFS, VYGG…VMNF, GSFL…VVFG, VVLG…LYVL, and YGVW…VVIM.

It belongs to the complex I subunit 6 family. As to quaternary structure, core subunit of respiratory chain NADH dehydrogenase (Complex I) which is composed of 45 different subunits.

It is found in the mitochondrion inner membrane. It catalyses the reaction a ubiquinone + NADH + 5 H(+)(in) = a ubiquinol + NAD(+) + 4 H(+)(out). In terms of biological role, core subunit of the mitochondrial membrane respiratory chain NADH dehydrogenase (Complex I) which catalyzes electron transfer from NADH through the respiratory chain, using ubiquinone as an electron acceptor. Essential for the catalytic activity and assembly of complex I. This is NADH-ubiquinone oxidoreductase chain 6 (MT-ND6) from Pteropus dasymallus (Ryukyu flying fox).